Reading from the N-terminus, the 434-residue chain is MEHLDLGPFSRASGTVRLPGSKSISNRVLLLAALAEGETTITNLLDSDDTRVMLDALEKLGVKFKRDGDTCVVTGTRGALPAARADLFLGNAGTAVRPLTAALAVNGGDYRIHGVPRMHERPIGDLVDGLRQIGAKIDYEENEGFPPLRIRPAQISVDAPIRVRGDVSSQFLTALLMTLPLVKTESGETIVEVSGELISKPYIEITIRLMERFGIKVERFGWERFTIPSGVRYQSPGKIMVEGDASSASYFLAAGALGGGPLRVEGVGRASIQGDVGFATALMKMGANVTMGDDWIEVRGVGNDHGKLDPIDMDFNLIPDAAMTIAVAALFADGTTTLRNIGSWRVKETDRIAAMATELSKVGAKVQAGEDFLVVTPPEQLTPNAAIDTYDDHRMAMCFSLVSLGGVPVRINDPKCVGKTFPDYFERFLALTQP.

Residues K22, S23, and R27 each contribute to the 3-phosphoshikimate site. K22 contacts phosphoenolpyruvate. Phosphoenolpyruvate contacts are provided by G93 and R121. Residues S168, S169, Q170, S199, D320, and K347 each contribute to the 3-phosphoshikimate site. Residue Q170 participates in phosphoenolpyruvate binding. D320 acts as the Proton acceptor in catalysis. Phosphoenolpyruvate-binding residues include R351, R394, and K419.

This sequence belongs to the EPSP synthase family. As to quaternary structure, monomer.

It localises to the cytoplasm. The catalysed reaction is 3-phosphoshikimate + phosphoenolpyruvate = 5-O-(1-carboxyvinyl)-3-phosphoshikimate + phosphate. It functions in the pathway metabolic intermediate biosynthesis; chorismate biosynthesis; chorismate from D-erythrose 4-phosphate and phosphoenolpyruvate: step 6/7. Its function is as follows. Catalyzes the transfer of the enolpyruvyl moiety of phosphoenolpyruvate (PEP) to the 5-hydroxyl of shikimate-3-phosphate (S3P) to produce enolpyruvyl shikimate-3-phosphate and inorganic phosphate. The polypeptide is 3-phosphoshikimate 1-carboxyvinyltransferase (Paraburkholderia phymatum (strain DSM 17167 / CIP 108236 / LMG 21445 / STM815) (Burkholderia phymatum)).